The sequence spans 117 residues: UPF0102 protein Clos_1471 (117 aa).

The protein belongs to the UPF0102 family.

The sequence is that of UPF0102 protein Clos_1471 from Alkaliphilus oremlandii (strain OhILAs) (Clostridium oremlandii (strain OhILAs)).